The sequence spans 409 residues: Divalent metal cation transporter MntH (409 aa).

Transmembrane regions (helical) follow at residues 19–39 (LSLMGPAFIAAIAYIDPGNFA), 46–66 (ATFGYTLLWVVVWANVMAMLV), 98–118 (WVQAEIIVMATDLAEFIGAAI), 122–142 (LLFGVTLLQGAVLTGIATFLI), 155–175 (LVIGGLLLFVAAAYIVELIFS), 196–216 (AVFLAAGVLGATIMPHVIYLH), 241–261 (IAMTIAGFVNLAMMATAAAAF), 290–310 (VFGLSLIAAGLSSTVVGTLAG), 320–340 (FYIPMWVRRIVTMLPSFIVIL), 348–368 (ILVMSQVLLSFGIALALVPLL), and 388–408 (ILGKLVVLIVVGLNAYLLISL).

The protein belongs to the NRAMP family.

The protein localises to the cell inner membrane. H(+)-stimulated, divalent metal cation uptake system. The chain is Divalent metal cation transporter MntH from Yersinia pseudotuberculosis serotype O:1b (strain IP 31758).